Reading from the N-terminus, the 77-residue chain is Sec-independent protein translocase protein TatA (77 aa).

A helical transmembrane segment spans residues 1-21 (MGSLSIWHWIVVIAVVLLLFG). A compositionally biased stretch (basic and acidic residues) spans 43–60 (MQDDDKAPEKTEPVKSID). Residues 43–77 (MQDDDKAPEKTEPVKSIDHGATPSATRTDVGSKAV) form a disordered region.

This sequence belongs to the TatA/E family. The Tat system comprises two distinct complexes: a TatABC complex, containing multiple copies of TatA, TatB and TatC subunits, and a separate TatA complex, containing only TatA subunits. Substrates initially bind to the TatABC complex, which probably triggers association of the separate TatA complex to form the active translocon.

It localises to the cell inner membrane. Part of the twin-arginine translocation (Tat) system that transports large folded proteins containing a characteristic twin-arginine motif in their signal peptide across membranes. TatA could form the protein-conducting channel of the Tat system. The sequence is that of Sec-independent protein translocase protein TatA from Bradyrhizobium sp. (strain BTAi1 / ATCC BAA-1182).